A 551-amino-acid chain; its full sequence is uncharacterized protein (551 aa).

It belongs to the GSP E family.

This is an uncharacterized protein from Methanocaldococcus jannaschii (strain ATCC 43067 / DSM 2661 / JAL-1 / JCM 10045 / NBRC 100440) (Methanococcus jannaschii).